Consider the following 160-residue polypeptide: 2-C-methyl-D-erythritol 2,4-cyclodiphosphate synthase (160 aa).

Aspartate 10 and histidine 12 together coordinate a divalent metal cation. Residues 10–12 and 36–37 contribute to the 4-CDP-2-C-methyl-D-erythritol 2-phosphate site; these read DVH and HS. Histidine 44 contributes to the a divalent metal cation binding site. Residues 58-60, 63-67, 102-108, 134-137, phenylalanine 141, and arginine 144 contribute to the 4-CDP-2-C-methyl-D-erythritol 2-phosphate site; these read DIG, FPDTD, AQAPKMA, and TTTE.

The protein belongs to the IspF family. Homotrimer. Requires a divalent metal cation as cofactor.

It catalyses the reaction 4-CDP-2-C-methyl-D-erythritol 2-phosphate = 2-C-methyl-D-erythritol 2,4-cyclic diphosphate + CMP. It participates in isoprenoid biosynthesis; isopentenyl diphosphate biosynthesis via DXP pathway; isopentenyl diphosphate from 1-deoxy-D-xylulose 5-phosphate: step 4/6. Functionally, involved in the biosynthesis of isopentenyl diphosphate (IPP) and dimethylallyl diphosphate (DMAPP), two major building blocks of isoprenoid compounds. Catalyzes the conversion of 4-diphosphocytidyl-2-C-methyl-D-erythritol 2-phosphate (CDP-ME2P) to 2-C-methyl-D-erythritol 2,4-cyclodiphosphate (ME-CPP) with a corresponding release of cytidine 5-monophosphate (CMP). The polypeptide is 2-C-methyl-D-erythritol 2,4-cyclodiphosphate synthase (Shewanella denitrificans (strain OS217 / ATCC BAA-1090 / DSM 15013)).